A 337-amino-acid polypeptide reads, in one-letter code: Putative 2-aminoethylphosphonate-binding periplasmic protein (337 aa).

The first 21 residues, 1–21 (MKLSRLALLSVFALASAPSWA), serve as a signal peptide directing secretion.

Belongs to the bacterial solute-binding protein 1 family.

The protein resides in the periplasm. Its function is as follows. Probably part of the PhnSTUV complex (TC 3.A.1.11.5) involved in 2-aminoethylphosphonate import. The polypeptide is Putative 2-aminoethylphosphonate-binding periplasmic protein (phnS) (Salmonella typhimurium (strain LT2 / SGSC1412 / ATCC 700720)).